Here is a 306-residue protein sequence, read N- to C-terminus: D-alanine--D-alanine ligase (306 aa).

The region spanning 101-303 (KQVWQGIGLT…FSQLVVKILE (203 aa)) is the ATP-grasp domain. Position 134–189 (134–189 (VADLGLPLIVKPSLEGSSVGMTKVNEISELRGALEAAFRYDVDLLVEKWLHGPEYT)) interacts with ATP. Mg(2+)-binding residues include Asp257, Glu270, and Asn272.

Belongs to the D-alanine--D-alanine ligase family. Requires Mg(2+) as cofactor. Mn(2+) is required as a cofactor.

Its subcellular location is the cytoplasm. It catalyses the reaction 2 D-alanine + ATP = D-alanyl-D-alanine + ADP + phosphate + H(+). The protein operates within cell wall biogenesis; peptidoglycan biosynthesis. Its function is as follows. Cell wall formation. The polypeptide is D-alanine--D-alanine ligase (Photorhabdus laumondii subsp. laumondii (strain DSM 15139 / CIP 105565 / TT01) (Photorhabdus luminescens subsp. laumondii)).